A 213-amino-acid polypeptide reads, in one-letter code: A-type ATP synthase subunit D (213 aa).

Belongs to the V-ATPase D subunit family. In terms of assembly, has multiple subunits with at least A(3), B(3), C, D, E, F, H, I and proteolipid K(x).

The protein resides in the cell membrane. Its function is as follows. Component of the A-type ATP synthase that produces ATP from ADP in the presence of a proton gradient across the membrane. This chain is A-type ATP synthase subunit D, found in Saccharolobus solfataricus (strain ATCC 35092 / DSM 1617 / JCM 11322 / P2) (Sulfolobus solfataricus).